A 954-amino-acid chain; its full sequence is Glycine dehydrogenase (decarboxylating) (954 aa).

At lysine 706 the chain carries N6-(pyridoxal phosphate)lysine.

It belongs to the GcvP family. As to quaternary structure, the glycine cleavage system is composed of four proteins: P, T, L and H. Pyridoxal 5'-phosphate is required as a cofactor.

The enzyme catalyses N(6)-[(R)-lipoyl]-L-lysyl-[glycine-cleavage complex H protein] + glycine + H(+) = N(6)-[(R)-S(8)-aminomethyldihydrolipoyl]-L-lysyl-[glycine-cleavage complex H protein] + CO2. Functionally, the glycine cleavage system catalyzes the degradation of glycine. The P protein binds the alpha-amino group of glycine through its pyridoxal phosphate cofactor; CO(2) is released and the remaining methylamine moiety is then transferred to the lipoamide cofactor of the H protein. The polypeptide is Glycine dehydrogenase (decarboxylating) (Pseudomonas savastanoi pv. phaseolicola (strain 1448A / Race 6) (Pseudomonas syringae pv. phaseolicola (strain 1448A / Race 6))).